The sequence spans 38 residues: Large ribosomal subunit protein bL36 (38 aa).

The protein belongs to the bacterial ribosomal protein bL36 family.

The chain is Large ribosomal subunit protein bL36 from Limosilactobacillus fermentum (strain NBRC 3956 / LMG 18251) (Lactobacillus fermentum).